The following is a 167-amino-acid chain: Ubiquitin-fold modifier-conjugating enzyme 1 (167 aa).

C116 serves as the catalytic Glycyl thioester intermediate. K122 is covalently cross-linked (Glycyl lysine isopeptide (Lys-Gly) (interchain with G-Cter in UFM1)).

The protein belongs to the ubiquitin-conjugating enzyme family. UFC1 subfamily. As to quaternary structure, interacts with UBA5 (via C-terminus). Interacts with UFL1. Interacts with UFM1. Interacts with KIRREL3. In terms of processing, ufmylated at Lys-122. Deufmylated by UFSP1.

Functionally, E2-like enzyme which specifically catalyzes the second step in ufmylation. Accepts the ubiquitin-like modifier UFM1 from the E1 enzyme UBA5 and forms an intermediate with UFM1 via a thioester linkage. Ufmylation is involved in various processes, such as ribosome recycling, response to DNA damage, interferon response or reticulophagy (also called ER-phagy). The sequence is that of Ubiquitin-fold modifier-conjugating enzyme 1 from Homo sapiens (Human).